A 259-amino-acid polypeptide reads, in one-letter code: Small ribosomal subunit protein eS1 (259 aa).

A compositionally biased stretch (basic residues) spans Met1–Lys18. The disordered stretch occupies residues Met1–Asp22.

It belongs to the eukaryotic ribosomal protein eS1 family. As to quaternary structure, component of the small ribosomal subunit. Mature ribosomes consist of a small (40S) and a large (60S) subunit. The 40S subunit contains about 33 different proteins and 1 molecule of RNA (18S). The 60S subunit contains about 49 different proteins and 3 molecules of RNA (25S, 5.8S and 5S).

It localises to the cytoplasm. This chain is Small ribosomal subunit protein eS1, found in Chlamydomonas reinhardtii (Chlamydomonas smithii).